The sequence spans 614 residues: BTB/POZ domain-containing protein At5g48800 (614 aa).

The BTB domain occupies 43–111; that stretch reads SDITIEVNGG…CYGINFEITS (69 aa). One can recognise an NPH3 domain in the interval 219–484; the sequence is DWWIEDLSVL…VQVLYFEQLK (266 aa). Tyr425 is subject to Phosphotyrosine. Disordered stretches follow at residues 492 to 525 and 583 to 614; these read SYSD…KDNY and GHSS…ASTD. The segment covering 507 to 521 has biased composition (polar residues); that stretch reads SWRINSGALSATMSP. The stretch at 522–562 forms a coiled coil; sequence KDNYASLRRENRELKLELARLRMRLNDLEKEHICMKRDMQR. Positions 583-597 are enriched in low complexity; it reads GHSSSRGSSSPSKQS.

Belongs to the NPH3 family.

It participates in protein modification; protein ubiquitination. Its function is as follows. May act as a substrate-specific adapter of an E3 ubiquitin-protein ligase complex (CUL3-RBX1-BTB) which mediates the ubiquitination and subsequent proteasomal degradation of target proteins. The chain is BTB/POZ domain-containing protein At5g48800 from Arabidopsis thaliana (Mouse-ear cress).